Consider the following 76-residue polypeptide: KANTR integral membrane protein (76 aa).

Residues 1–25 (MSPFSLLILVICAFSLFFLINLSRG) form the signal peptide. Residues 26 to 34 (LSILLVFTK) are Extracellular-facing. A helical membrane pass occupies residues 35-55 (NQLLALLLLSIVSLFSISLIS). The Cytoplasmic segment spans residues 56–76 (ALIFFDLLPSTFFGFILLLFF).

The protein resides in the membrane. This chain is KANTR integral membrane protein, found in Mus musculus (Mouse).